The sequence spans 215 residues: Holliday junction branch migration complex subunit RuvA (215 aa).

Residues 1–67 are domain I; it reads MIGWLQGERI…DDGSTLFGFC (67 aa). Positions 68–146 are domain II; sequence DQQERDLFRT…NWAPLQEPSL (79 aa). The tract at residues 147–158 is flexible linker; sequence SLVDRSDVKAIP. The tract at residues 159–215 is domain III; the sequence is LGEPCLRDLQITLETLGYEDLEIRRAMRAVASGPDVPAEDDGDAWLRASLKWLSQSA.

Belongs to the RuvA family. In terms of assembly, homotetramer. Forms an RuvA(8)-RuvB(12)-Holliday junction (HJ) complex. HJ DNA is sandwiched between 2 RuvA tetramers; dsDNA enters through RuvA and exits via RuvB. An RuvB hexamer assembles on each DNA strand where it exits the tetramer. Each RuvB hexamer is contacted by two RuvA subunits (via domain III) on 2 adjacent RuvB subunits; this complex drives branch migration. In the full resolvosome a probable DNA-RuvA(4)-RuvB(12)-RuvC(2) complex forms which resolves the HJ.

It is found in the cytoplasm. In terms of biological role, the RuvA-RuvB-RuvC complex processes Holliday junction (HJ) DNA during genetic recombination and DNA repair, while the RuvA-RuvB complex plays an important role in the rescue of blocked DNA replication forks via replication fork reversal (RFR). RuvA specifically binds to HJ cruciform DNA, conferring on it an open structure. The RuvB hexamer acts as an ATP-dependent pump, pulling dsDNA into and through the RuvAB complex. HJ branch migration allows RuvC to scan DNA until it finds its consensus sequence, where it cleaves and resolves the cruciform DNA. In Synechococcus sp. (strain WH7803), this protein is Holliday junction branch migration complex subunit RuvA.